The sequence spans 161 residues: Transcriptional repressor NrdR (161 aa).

Residues 1–11 (MRCPSCSSLDT) are compositionally biased toward polar residues. A disordered region spans residues 1 to 20 (MRCPSCSSLDTQVKDSRPTE). Residues 3–34 (CPSCSSLDTQVKDSRPTEDSAVIRRRRVCMAC) fold into a zinc finger. Residues 49–139 (LTVIKRNGRR…VYRNFREAKD (91 aa)) enclose the ATP-cone domain.

This sequence belongs to the NrdR family. Zn(2+) is required as a cofactor.

Its function is as follows. Negatively regulates transcription of bacterial ribonucleotide reductase nrd genes and operons by binding to NrdR-boxes. This is Transcriptional repressor NrdR from Rhodopseudomonas palustris (strain BisB18).